A 130-amino-acid chain; its full sequence is Odontogenesis associated phosphoprotein (130 aa).

An N-terminal signal peptide occupies residues 1–23; sequence MARRHCFSYWLLVCWLVVTVAEG.

As to expression, highly expressed in placenta.

The protein localises to the secreted. Functionally, may promote nucleation of hydroxyapatite. The sequence is that of Odontogenesis associated phosphoprotein from Homo sapiens (Human).